Here is a 130-residue protein sequence, read N- to C-terminus: Acyl carrier protein 2, chloroplastic (130 aa).

The N-terminal 48 residues, 1 to 48, are a transit peptide targeting the chloroplast; the sequence is MASITGSSVSFKCAPLQSSFNSKNYALKSSVTFWRRTPVMPRGLSVSC. The Carrier domain maps to 52 to 127; sequence PEMVTKVSDI…EAADMIEALQ (76 aa). O-(pantetheine 4'-phosphoryl)serine is present on serine 87.

It belongs to the acyl carrier protein (ACP) family. Post-translationally, 4'-phosphopantetheine is transferred from CoA to a specific serine of apo-ACP by acpS. This modification is essential for activity because fatty acids are bound in thioester linkage to the sulfhydryl of the prosthetic group. As to expression, roots, leaves and seeds.

Its subcellular location is the plastid. The protein resides in the chloroplast. The protein operates within lipid metabolism; fatty acid biosynthesis. In terms of biological role, carrier of the growing fatty acid chain in fatty acid biosynthesis. The protein is Acyl carrier protein 2, chloroplastic (ACL1.2) of Spinacia oleracea (Spinach).